The chain runs to 540 residues: Malolactic enzyme (540 aa).

The active-site Proton donor is Y90. K163 serves as the catalytic Proton acceptor. K163 is a substrate binding site. Mn(2+) contacts are provided by E234, D235, and D258. Residues 291 to 294 (GGSA), N403, and N448 contribute to the NAD(+) site. N448 is a substrate binding site.

The protein belongs to the malic enzymes family. As to quaternary structure, homodimer. The cofactor is Mn(2+). Requires NAD(+) as cofactor.

The enzyme catalyses (S)-malate + H(+) = (S)-lactate + CO2. In terms of biological role, involved in the malolactic fermentation (MLF) of wine, which results in a natural decrease in acidity and favorable changes in wine flavors. Catalyzes the decarboxylation of L-malate to L-lactate. This is Malolactic enzyme from Lactococcus lactis subsp. lactis (strain IL1403) (Streptococcus lactis).